The sequence spans 222 residues: Charged multivesicular body protein 3 (222 aa).

Gly2 carries the N-myristoyl glycine lipid modification. Residues 2 to 113 (GLFGKTQEKP…LQKSTEVMKA (112 aa)) form an intramolecular interaction with C-terminus region. Residues 22–54 (KIRKEMRVVDRQIRDIQREEEKVKRSVKDAAKK) adopt a coiled-coil conformation. 2 important for autoinhibitory function regions span residues 59-64 (VCVVLA) and 168-169 (IL). Residues 141-222 (EEMLEDTFES…MQSRLATLRS (82 aa)) are a coiled coil. The segment at 151–220 (MDDQEEMEEE…EAMQSRLATL (70 aa)) is intramolecular interaction with N-terminus. Positions 151-222 (MDDQEEMEEE…MQSRLATLRS (72 aa)) are interaction with VPS4A. A Glycyl lysine isopeptide (Lys-Gly) (interchain with G-Cter in ubiquitin) cross-link involves residue Lys179. The disordered stretch occupies residues 180 to 222 (APSKVTDALPEPEPSGAMAASEDEEEEEEALEAMQSRLATLRS). 3 interaction with STAMBP regions span residues 196–222 (AMAA…TLRS), 203–207 (EEEEE), and 221–222 (RS). Ser200 carries the phosphoserine modification. Residues 200-210 (SEDEEEEEEAL) show a composition bias toward acidic residues. Positions 201 to 211 (EDEEEEEEALE) match the MIT-interacting motif motif.

Belongs to the SNF7 family. In terms of assembly, probable core component of the endosomal sorting required for transport complex III (ESCRT-III). ESCRT-III components are thought to multimerize to form a flat lattice on the perimeter membrane of the endosome. Several assembly forms of ESCRT-III may exist that interact and act sequentially. Forms a metastable monomer in solution; its core structure (without part of the putative autoinhibitory C-terminal acidic region) oligomerizes into a flat lattice via two different dimerization interfaces. In vitro, heteromerizes with CHMP2A (but not CHMP4) to form helical tubular structures that expose membrane-interacting sites on the outside whereas VPS4B can associate on the inside of the tubule. May interact with IGFBP7; the relevance of such interaction however remains unclear. Interacts with CHMP2A. Interacts with CHMP4A; the interaction requires the release of CHMP4A autoinhibition. Interacts with VPS4A. Interacts with STAMBP; the interaction appears to relieve the autoinhibition of CHMP3. Interacts with VTA1.

The protein localises to the cytoplasm. It is found in the cytosol. The protein resides in the membrane. Its subcellular location is the endosome. It localises to the late endosome membrane. In terms of biological role, probable core component of the endosomal sorting required for transport complex III (ESCRT-III) which is involved in multivesicular bodies (MVBs) formation and sorting of endosomal cargo proteins into MVBs. MVBs contain intraluminal vesicles (ILVs) that are generated by invagination and scission from the limiting membrane of the endosome and mostly are delivered to lysosomes enabling degradation of membrane proteins, such as stimulated growth factor receptors, lysosomal enzymes and lipids. The MVB pathway appears to require the sequential function of ESCRT-O, -I,-II and -III complexes. ESCRT-III proteins mostly dissociate from the invaginating membrane before the ILV is released. The ESCRT machinery also functions in topologically equivalent membrane fission events, such as the terminal stages of cytokinesis and the budding of enveloped viruses (lentiviruses). ESCRT-III proteins are believed to mediate the necessary vesicle extrusion and/or membrane fission activities, possibly in conjunction with the AAA ATPase VPS4. Selectively binds to phosphatidylinositol 3,5-bisphosphate PtdIns(3,5)P2 and PtdIns(3,4)P2 in preference to other phosphoinositides tested. Involved in late stages of cytokinesis. Plays a role in endosomal sorting/trafficking of EGF receptor. The protein is Charged multivesicular body protein 3 (CHMP3) of Pongo abelii (Sumatran orangutan).